The sequence spans 92 residues: Small ribosomal subunit protein uS19 (92 aa).

Belongs to the universal ribosomal protein uS19 family.

In terms of biological role, protein S19 forms a complex with S13 that binds strongly to the 16S ribosomal RNA. The chain is Small ribosomal subunit protein uS19 from Crocosphaera subtropica (strain ATCC 51142 / BH68) (Cyanothece sp. (strain ATCC 51142)).